Here is a 61-residue protein sequence, read N- to C-terminus: ATP synthase F(0) complex subunit 8 (61 aa).

Residues 10-32 form a helical membrane-spanning segment; it reads FMILSSTWLIYTIILQPKILSHL.

This sequence belongs to the ATPase protein 8 family. In terms of assembly, component of the ATP synthase complex composed at least of ATP5F1A/subunit alpha, ATP5F1B/subunit beta, ATP5MC1/subunit c (homooctomer), MT-ATP6/subunit a, MT-ATP8/subunit 8, ATP5ME/subunit e, ATP5MF/subunit f, ATP5MG/subunit g, ATP5MK/subunit k, ATP5MJ/subunit j, ATP5F1C/subunit gamma, ATP5F1D/subunit delta, ATP5F1E/subunit epsilon, ATP5PF/subunit F6, ATP5PB/subunit b, ATP5PD/subunit d, ATP5PO/subunit OSCP. ATP synthase complex consists of a soluble F(1) head domain (subunits alpha(3) and beta(3)) - the catalytic core - and a membrane F(0) domain - the membrane proton channel (subunits c, a, 8, e, f, g, k and j). These two domains are linked by a central stalk (subunits gamma, delta, and epsilon) rotating inside the F1 region and a stationary peripheral stalk (subunits F6, b, d, and OSCP).

The protein resides in the mitochondrion membrane. Subunit 8, of the mitochondrial membrane ATP synthase complex (F(1)F(0) ATP synthase or Complex V) that produces ATP from ADP in the presence of a proton gradient across the membrane which is generated by electron transport complexes of the respiratory chain. ATP synthase complex consist of a soluble F(1) head domain - the catalytic core - and a membrane F(1) domain - the membrane proton channel. These two domains are linked by a central stalk rotating inside the F(1) region and a stationary peripheral stalk. During catalysis, ATP synthesis in the catalytic domain of F(1) is coupled via a rotary mechanism of the central stalk subunits to proton translocation. In vivo, can only synthesize ATP although its ATP hydrolase activity can be activated artificially in vitro. Part of the complex F(0) domain. This Chelonia mydas (Green sea-turtle) protein is ATP synthase F(0) complex subunit 8.